The primary structure comprises 276 residues: Phosducin-like protein 1 (276 aa).

Ser-18, Ser-19, Ser-20, and Ser-42 each carry phosphoserine. The segment at 18–74 (SSSEGEDNGDEGGDNKGASGKSRCSGLTIDTNPDATPAGGFRQQSSTNTGPKGVVKD) is disordered. The Phosducin domain occupies 62 to 272 (SSTNTGPKGV…LIEHGIIVDR (211 aa)). Positions 153-276 (FGQVQQLTSH…GIIVDRALYN (124 aa)) are thioredoxin fold.

It belongs to the phosducin family. Forms a complex with the beta and gamma subunits of the GTP-binding proteins. Interacts with the CCT chaperonin complex.

Functions as a co-chaperone for CCT in the assembly of heterotrimeric G protein complexes, facilitates the assembly of both Gbeta-Ggamma and RGS-Gbeta5 heterodimers. This chain is Phosducin-like protein 1, found in Drosophila melanogaster (Fruit fly).